We begin with the raw amino-acid sequence, 351 residues long: Glycerol-1-phosphate dehydrogenase [NAD(P)+] (351 aa).

NAD(+) contacts are provided by residues 97–101 (GKVID) and 119–122 (TSPS). Aspartate 124 is a binding site for substrate. Serine 128 is a binding site for NAD(+). Position 171 (aspartate 171) interacts with substrate. Zn(2+)-binding residues include aspartate 171 and histidine 251. Histidine 255 is a substrate binding site. Zn(2+) is bound at residue histidine 267.

Belongs to the glycerol-1-phosphate dehydrogenase family. As to quaternary structure, homodimer. Zn(2+) serves as cofactor.

It localises to the cytoplasm. It carries out the reaction sn-glycerol 1-phosphate + NAD(+) = dihydroxyacetone phosphate + NADH + H(+). The enzyme catalyses sn-glycerol 1-phosphate + NADP(+) = dihydroxyacetone phosphate + NADPH + H(+). Its pathway is membrane lipid metabolism; glycerophospholipid metabolism. Its function is as follows. Catalyzes the NAD(P)H-dependent reduction of dihydroxyacetonephosphate (DHAP or glycerone phosphate) to glycerol 1-phosphate (G1P). The G1P thus generated is used as the glycerophosphate backbone of phospholipids in the cellular membranes of Archaea. The protein is Glycerol-1-phosphate dehydrogenase [NAD(P)+] of Saccharolobus islandicus (strain L.S.2.15 / Lassen #1) (Sulfolobus islandicus).